The following is a 191-amino-acid chain: Protein GrpE (191 aa).

Over residues 1 to 10 (MNHEEQKVEA) the composition is skewed to basic and acidic residues. The interval 1-28 (MNHEEQKVEAMEQVEAQPVEPTDVDSEV) is disordered.

It belongs to the GrpE family. As to quaternary structure, homodimer.

Its subcellular location is the cytoplasm. In terms of biological role, participates actively in the response to hyperosmotic and heat shock by preventing the aggregation of stress-denatured proteins, in association with DnaK and GrpE. It is the nucleotide exchange factor for DnaK and may function as a thermosensor. Unfolded proteins bind initially to DnaJ; upon interaction with the DnaJ-bound protein, DnaK hydrolyzes its bound ATP, resulting in the formation of a stable complex. GrpE releases ADP from DnaK; ATP binding to DnaK triggers the release of the substrate protein, thus completing the reaction cycle. Several rounds of ATP-dependent interactions between DnaJ, DnaK and GrpE are required for fully efficient folding. This Aeromonas hydrophila subsp. hydrophila (strain ATCC 7966 / DSM 30187 / BCRC 13018 / CCUG 14551 / JCM 1027 / KCTC 2358 / NCIMB 9240 / NCTC 8049) protein is Protein GrpE.